The sequence spans 137 residues: Protein FrxA (137 aa).

In Pyrococcus furiosus (strain ATCC 43587 / DSM 3638 / JCM 8422 / Vc1), this protein is Protein FrxA (frxA).